The sequence spans 80 residues: Acyl carrier protein (80 aa).

In terms of domain architecture, Carrier spans 1 to 76 (MTLEEKIIEI…DVIDYLKVRN (76 aa)). S36 bears the O-(pantetheine 4'-phosphoryl)serine mark.

Belongs to the acyl carrier protein (ACP) family. In terms of processing, 4'-phosphopantetheine is transferred from CoA to a specific serine of apo-ACP by AcpS. This modification is essential for activity because fatty acids are bound in thioester linkage to the sulfhydryl of the prosthetic group.

The protein resides in the cytoplasm. The protein operates within lipid metabolism; fatty acid biosynthesis. Functionally, carrier of the growing fatty acid chain in fatty acid biosynthesis. In Syntrophus aciditrophicus (strain SB), this protein is Acyl carrier protein.